Consider the following 101-residue polypeptide: Small ribosomal subunit protein uS14 (101 aa).

Belongs to the universal ribosomal protein uS14 family. Part of the 30S ribosomal subunit. Contacts proteins S3 and S10.

Functionally, binds 16S rRNA, required for the assembly of 30S particles and may also be responsible for determining the conformation of the 16S rRNA at the A site. This is Small ribosomal subunit protein uS14 from Erythrobacter litoralis (strain HTCC2594).